The following is a 317-amino-acid chain: tRNA pseudouridine synthase B (317 aa).

The Nucleophile role is filled by Asp-47.

The protein belongs to the pseudouridine synthase TruB family. Type 1 subfamily.

The catalysed reaction is uridine(55) in tRNA = pseudouridine(55) in tRNA. Its function is as follows. Responsible for synthesis of pseudouridine from uracil-55 in the psi GC loop of transfer RNAs. The sequence is that of tRNA pseudouridine synthase B from Vibrio atlanticus (strain LGP32) (Vibrio splendidus (strain Mel32)).